The sequence spans 521 residues: Acetylcholine receptor subunit delta (521 aa).

The signal sequence occupies residues 1–21 (MAWIWISLLLPILIYFPGCFS). Topologically, residues 22–247 (ESEEERLLNH…ITFYLIIERK (226 aa)) are extracellular. N53 and N164 each carry an N-linked (GlcNAc...) asparagine glycan. C151 and C165 are joined by a disulfide. 3 helical membrane passes run 248–272 (PLFY…VFYL), 280–297 (MTLA…LLLI), and 314–335 (YLMF…VLNL). Over 336–475 (HFRTPSTHAI…WYRIARTVDR (140 aa)) the chain is Cytoplasmic. Position 394 is a phosphotyrosine; by Tyr-kinases (Y394). The helical transmembrane segment at 476–494 (LCLFLVTPVMIIGTLWIFL) threads the bilayer.

It belongs to the ligand-gated ion channel (TC 1.A.9) family. Acetylcholine receptor (TC 1.A.9.1) subfamily. As to quaternary structure, pentamer of two alpha chains, and one each of the beta, delta, and gamma (in immature muscle) or epsilon (in mature muscle) chains.

The protein resides in the postsynaptic cell membrane. It localises to the cell membrane. It catalyses the reaction K(+)(in) = K(+)(out). The enzyme catalyses Na(+)(in) = Na(+)(out). Its function is as follows. After binding acetylcholine, the AChR responds by an extensive change in conformation that affects all subunits and leads to opening of an ion-conducting channel across the plasma membrane. This chain is Acetylcholine receptor subunit delta (chrnd), found in Xenopus laevis (African clawed frog).